The sequence spans 100 residues: Co-chaperonin GroES (100 aa).

Belongs to the GroES chaperonin family. As to quaternary structure, heptamer of 7 subunits arranged in a ring. Interacts with the chaperonin GroEL.

It is found in the cytoplasm. Functionally, together with the chaperonin GroEL, plays an essential role in assisting protein folding. The GroEL-GroES system forms a nano-cage that allows encapsulation of the non-native substrate proteins and provides a physical environment optimized to promote and accelerate protein folding. GroES binds to the apical surface of the GroEL ring, thereby capping the opening of the GroEL channel. The protein is Co-chaperonin GroES of Mycobacterium leprae (strain Br4923).